The following is a 622-amino-acid chain: Chaperone protein HscA homolog (622 aa).

The protein belongs to the heat shock protein 70 family.

Its function is as follows. Chaperone involved in the maturation of iron-sulfur cluster-containing proteins. Has a low intrinsic ATPase activity which is markedly stimulated by HscB. The chain is Chaperone protein HscA homolog from Burkholderia mallei (strain NCTC 10247).